Consider the following 403-residue polypeptide: F-box/kelch-repeat protein At5g43190 (403 aa).

Residues 45–91 form the F-box domain; the sequence is PNIWSNLPNHLLEHILSLLPFKTLLTLRSISRHLRSLILSPSFISDH. Kelch repeat units follow at residues 91 to 140, 192 to 240, 291 to 339, and 343 to 393; these read HSFS…LLSS, KIFT…VFYN, ILYM…VCYH, and HVYC…FRWF.

The protein is F-box/kelch-repeat protein At5g43190 of Arabidopsis thaliana (Mouse-ear cress).